The sequence spans 502 residues: ATP synthase subunit alpha (502 aa).

169–176 lines the ATP pocket; the sequence is GDRQTGKT.

Belongs to the ATPase alpha/beta chains family. In terms of assembly, F-type ATPases have 2 components, CF(1) - the catalytic core - and CF(0) - the membrane proton channel. CF(1) has five subunits: alpha(3), beta(3), gamma(1), delta(1), epsilon(1). CF(0) has three main subunits: a(1), b(2) and c(9-12). The alpha and beta chains form an alternating ring which encloses part of the gamma chain. CF(1) is attached to CF(0) by a central stalk formed by the gamma and epsilon chains, while a peripheral stalk is formed by the delta and b chains.

It is found in the cell inner membrane. It catalyses the reaction ATP + H2O + 4 H(+)(in) = ADP + phosphate + 5 H(+)(out). In terms of biological role, produces ATP from ADP in the presence of a proton gradient across the membrane. The alpha chain is a regulatory subunit. The protein is ATP synthase subunit alpha of Trichlorobacter lovleyi (strain ATCC BAA-1151 / DSM 17278 / SZ) (Geobacter lovleyi).